We begin with the raw amino-acid sequence, 317 residues long: Ornithine carbamoyltransferase (317 aa).

Residues 54–57 (STRT), Q81, R105, and 132–135 (HPCQ) contribute to the carbamoyl phosphate site. L-ornithine-binding positions include N163, D227, and 231 to 232 (SM). Carbamoyl phosphate-binding positions include 267–268 (CL) and R295.

This sequence belongs to the aspartate/ornithine carbamoyltransferase superfamily. OTCase family.

Its subcellular location is the cytoplasm. It carries out the reaction carbamoyl phosphate + L-ornithine = L-citrulline + phosphate + H(+). Its pathway is amino-acid biosynthesis; L-arginine biosynthesis; L-arginine from L-ornithine and carbamoyl phosphate: step 1/3. Functionally, reversibly catalyzes the transfer of the carbamoyl group from carbamoyl phosphate (CP) to the N(epsilon) atom of ornithine (ORN) to produce L-citrulline. This Parafrankia sp. (strain EAN1pec) protein is Ornithine carbamoyltransferase.